We begin with the raw amino-acid sequence, 601 residues long: MNTAFAGFDENRAGRRAPGCTGRPAFGLGMDSQQDVVNLDQGGCCPALRKLLPRGFWDEARALFVLSGPLFLFQVLNFLTYVVGTVFCGHLGKVELASVTLGVAFVNVCGVSVGAGLSSACDTLMSQSFGSPNKKHVGVILQRGSLILLLCCLPCWALFLNTQHILLLFRQDPAVSRLTQDYAMIFIPGLPAIFLYSLLAKYLQNQGIVWPQVLSGVVGNCVNGVANYALVSVLNLGVRGSAYANTISQFVQAAFLFLHIVLKKLHLETWEGWSSQCLRDWGPFLSLAIPSMLMMCVEWWAYEIGSFLMGLLGVVDLSGQAIIYEVATVVYMIPMGLGMAVCVRVGTALGAADTLQAKRSAVSGLLCTAGTSLVVGTLLGLLNSQLGYIFTSDEEVIALVNQVLPIYIVFQLVEAVCCVFGGVLRGTGKQAFGAIVNAIMYYIVGLPLGIVLTFVVGMRIMGLWLGMLTCIFLAAVTFVVYAVQLDWKLAAEEAQKHAGLQQQQQQQQQQGAECTAPSPGPDKAVVSSVATGCNPGIALTMYSRPGCHVDFYGRPEAAPAPAAPASRLSVRQLLFRRGAALAASVAVLMAGLLVRVLTTGY.

The Cytoplasmic segment spans residues 1-62 (MNTAFAGFDE…PRGFWDEARA (62 aa)). Residues 63–83 (LFVLSGPLFLFQVLNFLTYVV) traverse the membrane as a helical segment. The Extracellular portion of the chain corresponds to 84 to 95 (GTVFCGHLGKVE). Residues 96–116 (LASVTLGVAFVNVCGVSVGAG) traverse the membrane as a helical segment. At 117–145 (LSSACDTLMSQSFGSPNKKHVGVILQRGS) the chain is on the cytoplasmic side. Residues 146–166 (LILLLCCLPCWALFLNTQHIL) traverse the membrane as a helical segment. Over 167–182 (LLFRQDPAVSRLTQDY) the chain is Extracellular. The helical transmembrane segment at 183–203 (AMIFIPGLPAIFLYSLLAKYL) threads the bilayer. Topologically, residues 204 to 212 (QNQGIVWPQ) are cytoplasmic. Residues 213-233 (VLSGVVGNCVNGVANYALVSV) traverse the membrane as a helical segment. Residues 234 to 241 (LNLGVRGS) are Extracellular-facing. The helical transmembrane segment at 242-262 (AYANTISQFVQAAFLFLHIVL) threads the bilayer. The Cytoplasmic portion of the chain corresponds to 263 to 281 (KKLHLETWEGWSSQCLRDW). Residues 282 to 301 (GPFLSLAIPSMLMMCVEWWA) traverse the membrane as a helical segment. The Extracellular portion of the chain corresponds to 302-320 (YEIGSFLMGLLGVVDLSGQ). The chain crosses the membrane as a helical span at residues 321–341 (AIIYEVATVVYMIPMGLGMAV). The Cytoplasmic portion of the chain corresponds to 342–361 (CVRVGTALGAADTLQAKRSA). Residues 362-382 (VSGLLCTAGTSLVVGTLLGLL) traverse the membrane as a helical segment. The Extracellular portion of the chain corresponds to 383-402 (NSQLGYIFTSDEEVIALVNQ). Residues 403–423 (VLPIYIVFQLVEAVCCVFGGV) traverse the membrane as a helical segment. Over 424-437 (LRGTGKQAFGAIVN) the chain is Cytoplasmic. A helical membrane pass occupies residues 438–458 (AIMYYIVGLPLGIVLTFVVGM). Position 459 (Arg-459) is a topological domain, extracellular. The helical transmembrane segment at 460 to 480 (IMGLWLGMLTCIFLAAVTFVV) threads the bilayer. Residues 481–577 (YAVQLDWKLA…LSVRQLLFRR (97 aa)) are Cytoplasmic-facing. Residues 578–598 (GAALAASVAVLMAGLLVRVLT) form a helical membrane-spanning segment. Residues 599 to 601 (TGY) are Extracellular-facing.

It belongs to the multi antimicrobial extrusion (MATE) (TC 2.A.66.1) family. Expressed in renal cortical tissues.

It is found in the cell membrane. The protein resides in the apical cell membrane. The enzyme catalyses thiamine(out) + H(+)(in) = thiamine(in) + H(+)(out). It carries out the reaction estrone 3-sulfate(in) + H(+)(out) = estrone 3-sulfate(out) + H(+)(in). It catalyses the reaction creatinine(in) + H(+)(out) = creatinine(out) + H(+)(in). In terms of biological role, multidrug efflux pump that functions as a H(+)/organic cation antiporter. Mediates the efflux of cationic compounds, such as the model cations, tetraethylammonium (TEA) and 1-methyl-4-phenylpyridinium (MPP+), the platinum-based drug oxaliplatin or weak bases that are positively charged at physiological pH, cimetidine or the antidiabetic drug metformin. Mediates the efflux of the endogenous compounds creatinine, thiamine and estrone-3-sulfate. Plays a physiological role in the excretion of drugs, toxins and endogenous metabolites through the kidney. The protein is Multidrug and toxin extrusion protein 2 (SLC47A2) of Oryctolagus cuniculus (Rabbit).